The primary structure comprises 359 residues: Putative nucleotidyltransferase MAB21L1 (359 aa).

A ribonucleoside 5'-triphosphate-binding positions include 23-24 and 63-66; these read RK and YEGL. The Mg(2+) site is built by Glu73 and Glu75. Residues Lys248 and 252 to 255 contribute to the a ribonucleoside 5'-triphosphate site; that span reads SLLK.

Belongs to the mab-21 family. In terms of assembly, monomer. Homodecamer; composed of 2 back to back homopentamers. The protein may exist as monomer in solution and oiligomerizes upon ligand binding.

It is found in the nucleus. Its function is as follows. Putative nucleotidyltransferase required for several aspects of embryonic development including normal development of the eye. It is unclear whether it displays nucleotidyltransferase activity in vivo. Binds single-stranded RNA (ssRNA). The sequence is that of Putative nucleotidyltransferase MAB21L1 (mab21l1) from Xenopus tropicalis (Western clawed frog).